The chain runs to 603 residues: DNA mismatch repair protein MutL (603 aa).

The segment covering Ile337–Ser347 has biased composition (basic and acidic residues). The interval Ile337–Pro383 is disordered.

The protein belongs to the DNA mismatch repair MutL/HexB family.

Functionally, this protein is involved in the repair of mismatches in DNA. It is required for dam-dependent methyl-directed DNA mismatch repair. May act as a 'molecular matchmaker', a protein that promotes the formation of a stable complex between two or more DNA-binding proteins in an ATP-dependent manner without itself being part of a final effector complex. The protein is DNA mismatch repair protein MutL of Listeria monocytogenes serotype 4b (strain F2365).